We begin with the raw amino-acid sequence, 157 residues long: Biotin carboxyl carrier protein of acetyl-CoA carboxylase (157 aa).

The Biotinyl-binding domain occupies 80–156 (YATIVSPMVG…DCGQALMKVE (77 aa)). Lysine 122 is subject to N6-biotinyllysine.

Its subcellular location is the plastid. It is found in the chloroplast. It functions in the pathway lipid metabolism; fatty acid biosynthesis. This protein is a component of the acetyl coenzyme A carboxylase complex; first, biotin carboxylase catalyzes the carboxylation of the carrier protein and then the transcarboxylase transfers the carboxyl group to form malonyl-CoA. The chain is Biotin carboxyl carrier protein of acetyl-CoA carboxylase (accB) from Porphyra purpurea (Red seaweed).